The following is a 304-amino-acid chain: Protein BOBBER 1 (304 aa).

Alanine 2 bears the N-acetylalanine mark. Residues glutamate 54–lysine 106 adopt a coiled-coil conformation. The interval alanine 111–glycine 141 is disordered. The segment covering glutamate 118–serine 131 has biased composition (basic and acidic residues). Residues threonine 142–valine 231 enclose the CS domain.

As to expression, expressed in all seedling tissues with highest expression levels at the root tip.

It localises to the cytoplasm. It is found in the cytoplasmic granule. In terms of biological role, small heat shock protein required for the establishment of auxin gradients and for patterning of the apical domain of the embryo. Involved in the specification of the cotyledon primordia. Also required for normal inflorescence and floral meristem function, normal developmental patterning and thermotolerance. Acts as a molecular chaperone. The polypeptide is Protein BOBBER 1 (BOB1) (Arabidopsis thaliana (Mouse-ear cress)).